A 149-amino-acid chain; its full sequence is Deoxyuridine 5'-triphosphate nucleotidohydrolase (149 aa).

Substrate is bound by residues 68–70 (RSG), N81, 85–87 (TVD), and K95.

The protein belongs to the dUTPase family. Mg(2+) is required as a cofactor.

It catalyses the reaction dUTP + H2O = dUMP + diphosphate + H(+). It functions in the pathway pyrimidine metabolism; dUMP biosynthesis; dUMP from dCTP (dUTP route): step 2/2. This enzyme is involved in nucleotide metabolism: it produces dUMP, the immediate precursor of thymidine nucleotides and it decreases the intracellular concentration of dUTP so that uracil cannot be incorporated into DNA. The protein is Deoxyuridine 5'-triphosphate nucleotidohydrolase of Neorickettsia sennetsu (strain ATCC VR-367 / Miyayama) (Ehrlichia sennetsu).